We begin with the raw amino-acid sequence, 152 residues long: Large ribosomal subunit protein uL15 (152 aa).

The disordered stretch occupies residues M1–G54. A compositionally biased stretch (gly residues) spans G24–V37.

The protein belongs to the universal ribosomal protein uL15 family. In terms of assembly, part of the 50S ribosomal subunit.

Its function is as follows. Binds to the 23S rRNA. The chain is Large ribosomal subunit protein uL15 from Psychrobacter sp. (strain PRwf-1).